The chain runs to 331 residues: Nucleotide-binding protein SGR_5570 (331 aa).

The disordered stretch occupies residues 1–43 (MTENTHETAPNTADTDTADFDTADTDRADGAADVSTNTPNETG). 55–62 (GMSGAGRS) contributes to the ATP binding site. 106–109 (DVRG) is a binding site for GTP.

It belongs to the RapZ-like family.

Displays ATPase and GTPase activities. In Streptomyces griseus subsp. griseus (strain JCM 4626 / CBS 651.72 / NBRC 13350 / KCC S-0626 / ISP 5235), this protein is Nucleotide-binding protein SGR_5570.